A 1139-amino-acid polypeptide reads, in one-letter code: MPSGGDQSPPPPPPPPAAAASDEEEEDDGEAEDAAPPAESPTPQIQQRFDELCSRLNMDEAARAEAWDSYRSMSESYTLEGNDLHWLACALYVACRKSVPTVSKGTVEGNYVSLTRILKCSEQSLIEFFNKMKKWEDMANLPPHFRERTERLERNFTVSAVIFKKYEPIFQDIFKYPQEEQPRQQRGRKQRRQPCTVSEIFHFCWVLFIYAKGNFPMISDDLVNSYHLLLCALDLVYGNALQCSNRKELVNPNFKGLSEDFHAKDSKPSSDPPCIIEKLCSLHDGLVLEAKGIKEHFWKPYIRKLYEKKLLKGKEENLTGFLEPGNFGESFKAINKAYEEYVLSVGNLDERIFLGEDAEEEIGTLSRCLNAGSGTETAERVQMKNILQQHFDKSKALRISTPLTGVRYIKENSPCVTPVSTATHSLSRLHTMLTGLRNAPSEKLEQILRTCSRDPTQAIANRLKEMFEIYSQHFQPDEDFSNCAKEIASKHFRFAEMLYYKVLESVIEQEQKRLGDMDLSGILEQDAFHRSLLACCLEVVTFSYKPPGNFPFITEIFDVPLYHFYKVIEVFIRAEDGLCREVVKHLNQIEEQILDHLAWKPESPLWEKIRDNENRVPTCEEVMPPQNLERADEICIAGSPLTPRRVTEVRADTGGLGRSITSPTTLYDRYSSPPASTTRRRLFVENDSPSDGGTPGRMPPQPLVNAVPVQNVSGETVSVTPVPGQTLVTMATATVTANNGQTVTIPVQGIANENGGITFFPVQVNVGGQAQAVTGSIQPLSAQALAGSLSSQQVTGTTLQVPGQVAIQQISPGGQQQKQGQSVTSSSNRPRKTSSLSLFFRKVYHLAAVRLRDLCAKLDISDELRKKIWTCFEFSIIQCPELMMDRHLDQLLMCAIYVMAKVTKEDKSFQNIMRCYRTQPQARSQVYRSVLIKGKRKRRNSGSSDSRSHQNSPTELNKDRTSRDSSPVMRSSSTLPVPQPSSAPPTPTRLTGANSDMEEEERGDLIQFYNNIYIKQIKTFAMKYSQANMDAPPLSPYPFVRTGSPRRIQLSQNHPVYISPHKNETMLSPREKIFYYFSNSPSKRLREINSMIRTGETPTKKRGILLEDGSESPAKRICPENHSALLRRLQDVANDRGSH.

The segment at 1–45 (MPSGGDQSPPPPPPPPAAAASDEEEEDDGEAEDAAPPAESPTPQI) is disordered. Over residues 8–17 (SPPPPPPPPA) the composition is skewed to pro residues. Residues 21 to 33 (SDEEEEDDGEAED) are compositionally biased toward acidic residues. S413 is subject to Phosphoserine. T417 carries the post-translational modification Phosphothreonine. The segment at 417 to 616 (TPVSTATHSL…EKIRDNENRV (200 aa)) is domain A. The tract at residues 417 to 1024 (TPVSTATHSL…KQIKTFAMKY (608 aa)) is pocket; binds E1A. A glycan (O-linked (GlcNAc) serine) is linked at S420. The spacer stretch occupies residues 617-827 (PTCEEVMPPQ…KQGQSVTSSS (211 aa)). Position 639 is a phosphoserine (S639). The residue at position 642 (T642) is a Phosphothreonine. A disordered region spans residues 654 to 678 (GGLGRSITSPTTLYDRYSSPPASTT). Phosphoserine is present on residues S662, S672, and S688. Over residues 810–827 (ISPGGQQQKQGQSVTSSS) the composition is skewed to low complexity. 2 disordered regions span residues 810-831 (ISPGGQQQKQGQSVTSSSNRPR) and 933-999 (KGKR…DMEE). A domain B region spans residues 828–1024 (NRPRKTSSLS…KQIKTFAMKY (197 aa)). Polar residues predominate over residues 941-955 (SGSSDSRSHQNSPTE). A phosphoserine mark is found at S948, S952, S966, S971, S972, and S973. Positions 964-973 (DSSPVMRSSS) are enriched in low complexity. Phosphothreonine is present on T974. The span at 977 to 987 (VPQPSSAPPTP) shows a compositional bias: pro residues. A phosphoserine mark is found at S981 and S982. T986 bears the Phosphothreonine mark. Residues S1035, S1068, S1080, and S1112 each carry the phosphoserine modification.

Belongs to the retinoblastoma protein (RB) family. In terms of assembly, interacts with AATF. Interacts with KMT5B, KMT5C and USP4. Component of the DREAM complex (also named LINC complex) at least composed of E2F4, E2F5, LIN9, LIN37, LIN52, LIN54, MYBL1, MYBL2, RBL1, RBL2, RBBP4, TFDP1 and TFDP2. The complex exists in quiescent cells where it represses cell cycle-dependent genes. It dissociates in S phase when LIN9, LIN37, LIN52 and LIN54 form a subcomplex that binds to MYBL2. Interacts with RINT1. Interacts with PML (isoform PML-1, isoform PML-2, isoform PML-3, isoform PML-4 and isoform PML-5). Interacts with RBBP9. Interacts with CD53. (Microbial infection) Interacts with JC virus small t antigen. In terms of processing, during G0 and early G1 phase of the cell cycle, phosphorylated on Ser-639 and on 5 sites within the domain B. Phosphorylation on Ser-672 in G1 leads to its ubiquitin-dependent proteolysis.

The protein localises to the nucleus. In terms of biological role, key regulator of entry into cell division. Directly involved in heterochromatin formation by maintaining overall chromatin structure and, in particular, that of constitutive heterochromatin by stabilizing histone methylation. Recruits and targets histone methyltransferases KMT5B and KMT5C, leading to epigenetic transcriptional repression. Controls histone H4 'Lys-20' trimethylation. Probably acts as a transcription repressor by recruiting chromatin-modifying enzymes to promoters. Potent inhibitor of E2F-mediated trans-activation, associates preferentially with E2F5. Binds to cyclins A and E. Binds to and may be involved in the transforming capacity of the adenovirus E1A protein. May act as a tumor suppressor. The chain is Retinoblastoma-like protein 2 (RBL2) from Homo sapiens (Human).